Here is a 3707-residue protein sequence, read N- to C-terminus: CUB and sushi domain-containing protein 3 (3707 aa).

Residues 1-21 (MKGSRKGESRAKESKPREPGT) show a composition bias toward basic and acidic residues. The interval 1–22 (MKGSRKGESRAKESKPREPGTR) is disordered. Residues 1–42 (MKGSRKGESRAKESKPREPGTRRCAKCGRLDFILKKKMGIKS) are Cytoplasmic-facing. A helical transmembrane segment spans residues 43-63 (GFTFWNLVFLLTLSCVKGFIY). At 64 to 3630 (TCGGTLKGLN…NQPHGTNSSS (3567 aa)) the chain is on the extracellular side. Cystine bridges form between Cys65–Cys91, Cys178–Cys218, Cys204–Cys235, and Cys241–Cys267. The region spanning 65–173 (CGGTLKGLNG…HGFKVYYEEL (109 aa)) is the CUB 1 domain. N-linked (GlcNAc...) asparagine glycosylation is found at Asn73 and Asn90. Positions 176-237 (SSCGNPGVPP…WDFPVPICRA (62 aa)) constitute a Sushi 1 domain. The CUB 2 domain occupies 241 to 345 (CGGTMRGSSG…RGFSAPYQGS (105 aa)). Positions 388–437 (HRLSEEQRVQVRSLSDSGLDPNTPEDQLSPHQADTQSTSRRPRNAEQIER) are disordered. Polar residues predominate over residues 411-426 (PEDQLSPHQADTQSTS). One can recognise a Sushi 2 domain in the interval 484–545 (NLCPDPGEPE…WSDHRPVCKV (62 aa)). Cystine bridges form between Cys486-Cys526, Cys512-Cys543, Cys548-Cys574, Cys664-Cys704, Cys690-Cys717, and Cys721-Cys747. A CUB 3 domain is found at 548–659 (CGSNLQGPSG…VGFKVNYKEI (112 aa)). A Sushi 3 domain is found at 662 to 719 (ESCGDPGTPLYGIREGDGFSNRDVLRFECQFGFELIGEKSIVCQENNQWSANIPICIF). Residues 721 to 829 (CLSNFTAPMG…RGFNITYNTF (109 aa)) enclose the CUB 4 domain. N-linked (GlcNAc...) asparagine glycosylation is found at Asn724 and Asn823. Residues 832–893 (NECPDPGIPI…WSGPIPRCGA (62 aa)) form the Sushi 4 domain. 3 cysteine pairs are disulfide-bonded: Cys834/Cys875, Cys860/Cys891, and Cys895/Cys921. Residues 895–1003 (CGGHFSAPSG…NGFKIHYESV (109 aa)) enclose the CUB 5 domain. N-linked (GlcNAc...) asparagine glycosylation occurs at Asn966. Residues 1008–1065 (YSCLDPGIPVHGRRYGHDFSIGSTVSFSCDPGYRLSHEEPLLCEKNHWWSHPLPTCDA) form the Sushi 5 domain. Disulfide bonds link Cys1010-Cys1050, Cys1036-Cys1063, and Cys1067-Cys1093. In terms of domain architecture, CUB 6 spans 1067-1177 (CGGDVRGPSG…EGFNITFSEY (111 aa)). Asn1092, Asn1126, and Asn1171 each carry an N-linked (GlcNAc...) asparagine glycan. A Sushi 6 domain is found at 1180–1239 (EPCEDPGIPQYGSRVGFSFGVGDTLTFSCSLGYRLEGSSEIICLGGGRRVWSAPLPRCVA). Intrachain disulfides connect Cys1182–Cys1222, Cys1208–Cys1237, and Cys1241–Cys1267. The CUB 7 domain occupies 1241–1349 (CGASATNNEG…EGFQLVYTSF (109 aa)). Residue Asn1280 is glycosylated (N-linked (GlcNAc...) asparagine). The 61-residue stretch at 1352–1412 (SHCEDPGIPQ…WDYPLPSCIA (61 aa)) folds into the Sushi 7 domain. 12 disulfides stabilise this stretch: Cys1354-Cys1395, Cys1381-Cys1410, Cys1414-Cys1441, Cys1528-Cys1568, Cys1554-Cys1584, Cys1588-Cys1614, Cys1701-Cys1741, Cys1727-Cys1758, Cys1762-Cys1788, Cys1878-Cys1918, Cys1904-Cys1935, and Cys1939-Cys1965. Residues 1414 to 1523 (CGGRFKGESS…SGFAIQFSSS (110 aa)) form the CUB 8 domain. In terms of domain architecture, Sushi 8 spans 1526 to 1586 (TACRDPGVPM…WQPSPPVCIA (61 aa)). A glycan (N-linked (GlcNAc...) asparagine) is linked at Asn1536. Residues 1588-1696 (CGGNLTGSSG…TGFHLEYKAK (109 aa)) enclose the CUB 9 domain. Asn1591 and Asn1709 each carry an N-linked (GlcNAc...) asparagine glycan. The Sushi 9 domain maps to 1699-1760 (ESCFDPGNIM…WNRVLPSCHA (62 aa)). Positions 1762-1870 (CGSRSTGSEG…KGFHFVYQAV (109 aa)) constitute a CUB 10 domain. A glycan (N-linked (GlcNAc...) asparagine) is linked at Asn1781. The 62-residue stretch at 1876-1937 (TQCSSVPEPR…WNDSLPTCIV (62 aa)) folds into the Sushi 10 domain. Asn1929 is a glycosylation site (N-linked (GlcNAc...) asparagine). The region spanning 1939-2047 (CGGILTKRKG…AGFHLEYTAI (109 aa)) is the CUB 11 domain. An N-linked (GlcNAc...) asparagine glycan is attached at Asn2019. Positions 2050–2109 (DSCPEPQTPSSGIKVGDRYMVGDVVSFQCDQGYSLQGHSHITCMPGPVRRWNYPIPICLA) constitute a Sushi 11 domain. 3 disulfides stabilise this stretch: Cys2052-Cys2092, Cys2078-Cys2107, and Cys2111-Cys2137. One can recognise a CUB 12 domain in the interval 2111 to 2219 (CGGAMSDFSG…QGFHIVYQAY (109 aa)). A glycan (N-linked (GlcNAc...) asparagine) is linked at Asn2155. The 60-residue stretch at 2222–2281 (QSCPDPRPFRNGFVIGNDFTVGQTISFECFPGYTLIGNSALTCLHGVSRNWNHPLPRCEA) folds into the Sushi 12 domain. 36 cysteine pairs are disulfide-bonded: Cys2224–Cys2264, Cys2250–Cys2279, Cys2283–Cys2309, Cys2395–Cys2437, Cys2423–Cys2452, Cys2456–Cys2484, Cys2569–Cys2610, Cys2596–Cys2627, Cys2632–Cys2674, Cys2658–Cys2689, Cys2694–Cys2739, Cys2725–Cys2754, Cys2759–Cys2799, Cys2785–Cys2812, Cys2817–Cys2857, Cys2843–Cys2870, Cys2875–Cys2915, Cys2901–Cys2928, Cys2933–Cys2977, Cys2963–Cys2990, Cys2995–Cys3035, Cys3021–Cys3048, Cys3056–Cys3096, Cys3082–Cys3109, Cys3114–Cys3155, Cys3141–Cys3168, Cys3173–Cys3215, Cys3199–Cys3228, Cys3233–Cys3273, Cys3259–Cys3286, Cys3291–Cys3331, Cys3317–Cys3344, Cys3352–Cys3393, Cys3379–Cys3406, Cys3411–Cys3453, and Cys3438–Cys3466. The region spanning 2283 to 2394 (CGGNITAMNG…LSYHAYQLRV (112 aa)) is the CUB 13 domain. N-linked (GlcNAc...) asparagine glycans are attached at residues Asn2286 and Asn2291. Residues 2393 to 2454 (RVCQPPPPVP…MDGAPPVCQV (62 aa)) form the Sushi 13 domain. Positions 2456–2567 (CPANELRLDS…KGFRIRYIAF (112 aa)) constitute a CUB 14 domain. 15 Sushi domains span residues 2567–2629 (FYCS…ACQA), 2630–2691 (ISCG…RCVV), 2692–2756 (VTCP…YCQI), 2757–2814 (ISCG…RCLA), 2815–2872 (GHCG…SCVP), 2873–2930 (VSCG…VCKV), 2931–2992 (VNCS…ECIM), 2993–3050 (IDCG…HCSG), 3054–3111 (GTCG…ECKA), 3112–3170 (VQCG…NCTI), 3171–3230 (ISCG…TCRA), 3231–3288 (VTCS…QCLP), 3289–3346 (KFCG…HCIE), 3350–3408 (TSCE…ECIP), and 3409–3468 (HSCK…VCEA). Over residues 3052-3065 (TTGTCGDPGTPGHG) the composition is skewed to low complexity. A disordered region spans residues 3052 to 3071 (TTGTCGDPGTPGHGSRQESD). A helical transmembrane segment spans residues 3631–3651 (VAIAILVPFFALIFAGFGFYL). At 3652 to 3707 (YKQRTAPKTQYTGCSVHENNNGQAAFENPMYDTNAKSVEGKAVRFDPNLNTVCTMV) the chain is on the cytoplasmic side.

It belongs to the CSMD family. In terms of tissue distribution, expressed in the apical dendrites of postnatal hippocampal neurons (at protein level).

The protein resides in the cell membrane. Functionally, involved in dendrite development. The polypeptide is CUB and sushi domain-containing protein 3 (Csmd3) (Mus musculus (Mouse)).